The sequence spans 452 residues: Low-affinity putrescine importer PlaP (452 aa).

The Cytoplasmic segment spans residues 1 to 16 (MSHNVTPNTSRVELRK). Residues 17 to 37 (TLTLVPVVMMGLAYMQPMTLF) form a helical membrane-spanning segment. Residues 38 to 48 (DTFGIVSGLTD) are Periplasmic-facing. Residues 49–69 (GHVPTAYAFALIAILFTALSY) form a helical membrane-spanning segment. The Cytoplasmic portion of the chain corresponds to 70-95 (GKLVRRYPSAGSAYTYAQKSISPTVG). A helical transmembrane segment spans residues 96–116 (FMVGWSSLLDYLFAPMINILL). Over 117-123 (AKIYFEA) the chain is Periplasmic. A helical transmembrane segment spans residues 124-144 (LVPSIPSWMFVVALVAFMTAF). Topologically, residues 145 to 158 (NLRSLKSVANFNTV) are cytoplasmic. A helical membrane pass occupies residues 159 to 179 (IVVLQVVLIAVILGMVVYGVF). At 180-199 (EGEGAGTLASTRPFWSGDAH) the chain is on the periplasmic side. Residues 200 to 220 (VIPMITGATILCFSFTGFDGI) form a helical membrane-spanning segment. The Cytoplasmic portion of the chain corresponds to 221–237 (SNLSEETKDAERVIPRA). The chain crosses the membrane as a helical span at residues 238–258 (IFLTALIGGMIFIFATYFLQL). Topologically, residues 259–283 (YFPDISRFKDPDASQPEIMLYVAGK) are periplasmic. A helical transmembrane segment spans residues 284–304 (AFQVGALIFSTITVLASGMAA). Topologically, residues 305 to 339 (HAGVARLMYVMGRDGVFPKSFFGYVHPKWRTPAMN) are cytoplasmic. A run of 2 helical transmembrane segments spans residues 340–360 (IILVGAIALLAINFDLVMATA) and 361–381 (LINFGALVAFTFVNLSVISQF). Topologically, residues 382-394 (WIREKRNKTLKDH) are cytoplasmic. A helical transmembrane segment spans residues 395-415 (FQYLFLPMCGALTVGALWVNL). The Periplasmic segment spans residues 416 to 417 (EE). The chain crosses the membrane as a helical span at residues 418-438 (SSMVLGLIWAAIGLIYLACVT). The Cytoplasmic portion of the chain corresponds to 439–452 (KSFRNPVPQYEDVA).

Belongs to the amino acid-polyamine-organocation (APC) superfamily.

The protein localises to the cell inner membrane. It catalyses the reaction putrescine(in) + H(+)(in) = putrescine(out) + H(+)(out). Functionally, putrescine importer. This is Low-affinity putrescine importer PlaP (plaP) from Escherichia coli O157:H7.